Here is a 442-residue protein sequence, read N- to C-terminus: MAFEFKLPDIGEGIHEGEIVKWFVKPNDEVDEDDVLAEVQNDKAVVEIPSPVKGKVLELKVEEGTVATVGQTIITFDAPGYEDLQFKGSDESDDAKTEAQVQSTAEAGQDVAKEEQAQEPAKATGAGQQDQAEVDPNKRVIAMPSVRKYAREKGVDIRKVTGSGNNGRVVKEDIDSFVNGGAQEAAPQETAAPQETAAKPAAAPAPEGEFPETREKMSGIRKAIAKAMVNSKHTAPHVTLMDEVDVTNLVAHRKQFKQVAADQGIKLTYLPYVVKALTSALKKFPVLNTSIDDKTDEVIQKHYFNIGIAADTEKGLLVPVVKNADRKSVFEISDEINGLATKAREGKLAPAEMKGASCTITNIGSAGGQWFTPVINHPEVAILGIGRIAEKAIVRDGEIVAAPVLALSLSFDHRMIDGATAQNALNHIKRLLNDPQLILMEA.

The Lipoyl-binding domain maps to 2–77; it reads AFEFKLPDIG…TVGQTIITFD (76 aa). K43 is subject to N6-lipoyllysine. The segment covering 84–97 has biased composition (basic and acidic residues); that stretch reads LQFKGSDESDDAKT. The interval 84–136 is disordered; the sequence is LQFKGSDESDDAKTEAQVQSTAEAGQDVAKEEQAQEPAKATGAGQQDQAEVDP. The Peripheral subunit-binding (PSBD) domain occupies 141–178; sequence IAMPSVRKYAREKGVDIRKVTGSGNNGRVVKEDIDSFV. Residues 182-208 show a composition bias toward low complexity; the sequence is AQEAAPQETAAPQETAAKPAAAPAPEG. Residues 182 to 215 form a disordered region; it reads AQEAAPQETAAPQETAAKPAAAPAPEGEFPETRE. The active site involves H413.

Belongs to the 2-oxoacid dehydrogenase family. In terms of assembly, forms a 24-polypeptide structural core with octahedral symmetry. It depends on (R)-lipoate as a cofactor.

The catalysed reaction is N(6)-[(R)-dihydrolipoyl]-L-lysyl-[protein] + acetyl-CoA = N(6)-[(R)-S(8)-acetyldihydrolipoyl]-L-lysyl-[protein] + CoA. Its function is as follows. The pyruvate dehydrogenase complex catalyzes the overall conversion of pyruvate to acetyl-CoA and CO(2). It contains multiple copies of three enzymatic components: pyruvate dehydrogenase (E1), dihydrolipoamide acetyltransferase (E2) and lipoamide dehydrogenase (E3). Functionally, the B.subtilis PDH complex also possesses branched-chain 2-oxoacid dehydrogenase (BCDH) activity. The polypeptide is Dihydrolipoyllysine-residue acetyltransferase component of pyruvate dehydrogenase complex (pdhC) (Bacillus subtilis (strain 168)).